We begin with the raw amino-acid sequence, 264 residues long: MSNSNIHTTAVIAEGAKLGKNVKIGPYCIIGPEVVLHDNVELKSHVVIEGITEIGENTVIYPFASIGQPPQILKYANERSSTIIGSNNTIREYVTVQAGSQRGGMMTRVGNNNLFMVGVHIGHDCKIGNNVVFANYVSLAGHIGVGDYTIIGGLSAVHQYARIGEYSMIGGLSPVGADVIPFGLVSSKRAVLEGLNLIGMNRKGFDKVKSLSALKAIEEIFSGEGNFAERIKQVAEKYNNNSIVIQIIDFLNQDSNRAFCRFEK.

This sequence belongs to the transferase hexapeptide repeat family. LpxA subfamily. In terms of assembly, homotrimer.

It localises to the cytoplasm. It carries out the reaction a (3R)-hydroxyacyl-[ACP] + UDP-N-acetyl-alpha-D-glucosamine = a UDP-3-O-[(3R)-3-hydroxyacyl]-N-acetyl-alpha-D-glucosamine + holo-[ACP]. It participates in glycolipid biosynthesis; lipid IV(A) biosynthesis; lipid IV(A) from (3R)-3-hydroxytetradecanoyl-[acyl-carrier-protein] and UDP-N-acetyl-alpha-D-glucosamine: step 1/6. Involved in the biosynthesis of lipid A, a phosphorylated glycolipid that anchors the lipopolysaccharide to the outer membrane of the cell. The polypeptide is Acyl-[acyl-carrier-protein]--UDP-N-acetylglucosamine O-acyltransferase (Rickettsia conorii (strain ATCC VR-613 / Malish 7)).